Here is a 355-residue protein sequence, read N- to C-terminus: D-alanine--D-alanine ligase (355 aa).

In terms of domain architecture, ATP-grasp spans 143-350 (KQIFSNLSIP…IDQLVAKLID (208 aa)). 178–233 (IEKLNLPVFVKPANSGSSLGISKAKNKSEIIKALQKAWEIDSRIVIEEGLNVRELE) contributes to the ATP binding site. Asp-303, Glu-317, and Asn-319 together coordinate Mg(2+).

The protein belongs to the D-alanine--D-alanine ligase family. Requires Mg(2+) as cofactor. Mn(2+) is required as a cofactor.

It localises to the cytoplasm. It catalyses the reaction 2 D-alanine + ATP = D-alanyl-D-alanine + ADP + phosphate + H(+). Its pathway is cell wall biogenesis; peptidoglycan biosynthesis. Its function is as follows. Cell wall formation. This chain is D-alanine--D-alanine ligase, found in Prochlorococcus marinus (strain MIT 9515).